A 120-amino-acid polypeptide reads, in one-letter code: Large ribosomal subunit protein uL22 (120 aa).

The segment at 1-20 (MFVNRRYTARGKNLPSSPKK) is disordered.

This sequence belongs to the universal ribosomal protein uL22 family. Part of the 50S ribosomal subunit.

This protein binds specifically to 23S rRNA; its binding is stimulated by other ribosomal proteins, e.g. L4, L17, and L20. It is important during the early stages of 50S assembly. It makes multiple contacts with different domains of the 23S rRNA in the assembled 50S subunit and ribosome. Functionally, the globular domain of the protein is located near the polypeptide exit tunnel on the outside of the subunit, while an extended beta-hairpin is found that lines the wall of the exit tunnel in the center of the 70S ribosome. The polypeptide is Large ribosomal subunit protein uL22 (Borrelia turicatae (strain 91E135)).